The sequence spans 381 residues: uncharacterized protein (381 aa).

9 helical membrane passes run 59–79 (LITLFGFISIIVSYFVTLYYM), 84–104 (GVAPKWLYLFNALCIFIYQTM), 147–167 (VGVNQISFFTTLWIMYVFFMA), 190–210 (SMMAGHIFTFFYGEQFWFNTI), 222–242 (LVLLVVILGGVGTILLNTFSI), 250–270 (ILTNIINLVPISILLGVSIYW), 284–304 (HYFMGIFGILFALVTGKLILA), 311–331 (LSPIQLIMLPLIAVILNIYKF), and 344–364 (VYFFVVFIVYIHFAYDVVTSL).

It belongs to the CDP-alcohol phosphatidyltransferase class-I family.

The protein localises to the membrane. This is an uncharacterized protein from Dictyostelium discoideum (Social amoeba).